Consider the following 204-residue polypeptide: N-(5'-phosphoribosyl)anthranilate isomerase (204 aa).

This sequence belongs to the TrpF family.

It carries out the reaction N-(5-phospho-beta-D-ribosyl)anthranilate = 1-(2-carboxyphenylamino)-1-deoxy-D-ribulose 5-phosphate. It participates in amino-acid biosynthesis; L-tryptophan biosynthesis; L-tryptophan from chorismate: step 3/5. This is N-(5'-phosphoribosyl)anthranilate isomerase from Pseudomonas fluorescens (strain Pf0-1).